The sequence spans 174 residues: DNA replication inhibitor plutonium (174 aa).

ANK repeat units follow at residues 39 to 68 and 72 to 103; these read YGNTALLKACYLGRFECARTLLEFGANIFA and FGQNALTLATYAGHLTLVKELLRRRSYKDFNL. At Thr167 the chain carries Phosphothreonine.

In terms of biological role, inhibits DNA replication early in developments. May bind and block the action of a replication or initiation factor. This Drosophila melanogaster (Fruit fly) protein is DNA replication inhibitor plutonium (plu).